Consider the following 314-residue polypeptide: Deoxyribonuclease-1-like 1 (314 aa).

The N-terminal stretch at 1 to 37 (MPFGQPGFLWRVPDAHIAMRGLVMAPLLILLVGGTEA) is a signal peptide. Residue Asn102 is glycosylated (N-linked (GlcNAc...) asparagine). Glu113 is an active-site residue. Asn133 carries N-linked (GlcNAc...) asparagine glycosylation. His164 is a catalytic residue. An intrachain disulfide couples Cys203 to Cys240. Residue Asn239 is glycosylated (N-linked (GlcNAc...) asparagine).

Belongs to the DNase I family. In terms of tissue distribution, highly expressed in heart and skeletal muscles. Low expression in brain and thymus. Intermediated expression in other tissues.

It is found in the endoplasmic reticulum. This Mus musculus (Mouse) protein is Deoxyribonuclease-1-like 1 (Dnase1l1).